The following is a 166-amino-acid chain: Tetranectin-like protein (166 aa).

Intrachain disulfides connect cysteine 37-cysteine 47, cysteine 64-cysteine 160, and cysteine 136-cysteine 152. Residues 43 to 161 enclose the C-type lectin domain; that stretch reads IHKKCYLASR…CRSEKRYICE (119 aa).

The polypeptide is Tetranectin-like protein (Carcharhinus perezii (Reef shark)).